We begin with the raw amino-acid sequence, 226 residues long: RPA-interacting protein A (226 aa).

Positions 1 to 45 (MEAERRHRALYKGTTPPWKETYRKRCVERLKRNRSKLLDKFRQVG) are interaction with importin beta. The interaction with RPA1 stretch occupies residues 49-171 (HGGVGGSFLV…QCGVYINTQS (123 aa)). The segment at 144–219 (CPVCNRNYLT…ASLFMSCQEC (76 aa)) adopts an RIP-type zinc-finger fold.

In terms of assembly, interacts directly with the rpa1 subunit of RPA complex. Interacts with importin beta, but not with importin alpha. Forms a complex with the RPA complex and importin beta, which is dissociated by Ran-GTP.

Its subcellular location is the nucleus. In terms of biological role, mediates the import of RPA complex into the nucleus, via its interaction with importin beta. This chain is RPA-interacting protein A (rpain-a), found in Xenopus laevis (African clawed frog).